The primary structure comprises 258 residues: tRNA (guanine-N(1)-)-methyltransferase (258 aa).

Residues glycine 122 and 142 to 147 (LGDFVL) contribute to the S-adenosyl-L-methionine site.

This sequence belongs to the RNA methyltransferase TrmD family. As to quaternary structure, homodimer.

The protein resides in the cytoplasm. The catalysed reaction is guanosine(37) in tRNA + S-adenosyl-L-methionine = N(1)-methylguanosine(37) in tRNA + S-adenosyl-L-homocysteine + H(+). Functionally, specifically methylates guanosine-37 in various tRNAs. This Hahella chejuensis (strain KCTC 2396) protein is tRNA (guanine-N(1)-)-methyltransferase.